We begin with the raw amino-acid sequence, 277 residues long: MDNAVDRHVFYISDGTAITAEVLGHAVMSQFPVTISSITLPFVENESRARAVKDQIDAIYHQTGVRPLVFYSIVLPEIRAIILRSEGFCQDIVQALVAPLQQEMKLDPTPIAHRTHGLNPNNLNKYDARIAAIDYTLAHDDGISLRNLDQAQVILLGVSRCGKTPTSLYLAMQFGIRAANYPFIADDMDNLVLPASLKPLQHKLFGLTIDPERLAAIREERRENSRYASLRQCRMEVAEVEALYRKNQIPWINSTNYSVEEIATKILDIMGLSRRMY.

Residue 157-164 participates in ADP binding; the sequence is GVSRCGKT.

This sequence belongs to the pyruvate, phosphate/water dikinase regulatory protein family. PSRP subfamily.

The catalysed reaction is [pyruvate, water dikinase] + ADP = [pyruvate, water dikinase]-phosphate + AMP + H(+). It carries out the reaction [pyruvate, water dikinase]-phosphate + phosphate + H(+) = [pyruvate, water dikinase] + diphosphate. Functionally, bifunctional serine/threonine kinase and phosphorylase involved in the regulation of the phosphoenolpyruvate synthase (PEPS) by catalyzing its phosphorylation/dephosphorylation. The sequence is that of Phosphoenolpyruvate synthase regulatory protein from Escherichia coli O6:K15:H31 (strain 536 / UPEC).